The primary structure comprises 343 residues: CRISPR-associated endonuclease Cas1 1 (343 aa).

Residues Glu166, His234, and Glu249 each coordinate Mn(2+).

The protein belongs to the CRISPR-associated endonuclease Cas1 family. In terms of assembly, homodimer, forms a heterotetramer with a Cas2 homodimer. Mg(2+) is required as a cofactor. Mn(2+) serves as cofactor.

CRISPR (clustered regularly interspaced short palindromic repeat), is an adaptive immune system that provides protection against mobile genetic elements (viruses, transposable elements and conjugative plasmids). CRISPR clusters contain spacers, sequences complementary to antecedent mobile elements, and target invading nucleic acids. CRISPR clusters are transcribed and processed into CRISPR RNA (crRNA). Acts as a dsDNA endonuclease. Involved in the integration of spacer DNA into the CRISPR cassette. The protein is CRISPR-associated endonuclease Cas1 1 of Moorella thermoacetica (strain ATCC 39073 / JCM 9320).